A 78-amino-acid chain; its full sequence is Probable [Fe-S]-dependent transcriptional repressor (78 aa).

Iron-sulfur cluster-binding residues include Cys-56, Cys-61, Cys-64, and Cys-70.

It belongs to the FeoC family.

May function as a transcriptional regulator that controls feoABC expression. In Enterobacter sp. (strain 638), this protein is Probable [Fe-S]-dependent transcriptional repressor.